We begin with the raw amino-acid sequence, 770 residues long: Transcription activator AMTR1 (770 aa).

The zn(2)-C6 fungal-type DNA-binding region spans 7-34; sequence CLTCRQRKLKCDEKKPVCRQCAKASREC.

It localises to the nucleus. Its function is as follows. Transcription factor that regulates the expression of the gene clusters that mediate the biosynthesis of AM-toxins, host-selective toxins (HSTs) causing Alternaria blotch on apple, a worldwide distributed disease. AM-toxins have two target sites for affecting susceptible apple cells; they cause invagination of the plasma membrane and electrolyte loss and chloroplast disorganization. The chain is Transcription activator AMTR1 from Alternaria alternata (Alternaria rot fungus).